Consider the following 117-residue polypeptide: Holo-[acyl-carrier-protein] synthase (117 aa).

Asp6 and Glu55 together coordinate Mg(2+).

The protein belongs to the P-Pant transferase superfamily. AcpS family. Requires Mg(2+) as cofactor.

It is found in the cytoplasm. The catalysed reaction is apo-[ACP] + CoA = holo-[ACP] + adenosine 3',5'-bisphosphate + H(+). In terms of biological role, transfers the 4'-phosphopantetheine moiety from coenzyme A to a Ser of acyl-carrier-protein. The protein is Holo-[acyl-carrier-protein] synthase of Chlorobaculum parvum (strain DSM 263 / NCIMB 8327) (Chlorobium vibrioforme subsp. thiosulfatophilum).